A 354-amino-acid polypeptide reads, in one-letter code: UDP-N-acetylglucosamine--N-acetylmuramyl-(pentapeptide) pyrophosphoryl-undecaprenol N-acetylglucosamine transferase (354 aa).

UDP-N-acetyl-alpha-D-glucosamine contacts are provided by residues 11–13, arginine 164, serine 194, and glutamine 289; that span reads TAG.

It belongs to the glycosyltransferase 28 family. MurG subfamily.

The protein localises to the cell membrane. The catalysed reaction is di-trans,octa-cis-undecaprenyl diphospho-N-acetyl-alpha-D-muramoyl-L-alanyl-D-glutamyl-meso-2,6-diaminopimeloyl-D-alanyl-D-alanine + UDP-N-acetyl-alpha-D-glucosamine = di-trans,octa-cis-undecaprenyl diphospho-[N-acetyl-alpha-D-glucosaminyl-(1-&gt;4)]-N-acetyl-alpha-D-muramoyl-L-alanyl-D-glutamyl-meso-2,6-diaminopimeloyl-D-alanyl-D-alanine + UDP + H(+). The protein operates within cell wall biogenesis; peptidoglycan biosynthesis. Functionally, cell wall formation. Catalyzes the transfer of a GlcNAc subunit on undecaprenyl-pyrophosphoryl-MurNAc-pentapeptide (lipid intermediate I) to form undecaprenyl-pyrophosphoryl-MurNAc-(pentapeptide)GlcNAc (lipid intermediate II). In Clostridium botulinum (strain Kyoto / Type A2), this protein is UDP-N-acetylglucosamine--N-acetylmuramyl-(pentapeptide) pyrophosphoryl-undecaprenol N-acetylglucosamine transferase.